Here is a 425-residue protein sequence, read N- to C-terminus: UDP-N-acetylglucosamine 1-carboxyvinyltransferase (425 aa).

23–24 contributes to the phosphoenolpyruvate binding site; it reads KN. Arg100 contacts UDP-N-acetyl-alpha-D-glucosamine. Catalysis depends on Cys124, which acts as the Proton donor. The residue at position 124 (Cys124) is a 2-(S-cysteinyl)pyruvic acid O-phosphothioketal. Residues Asp313 and Ile335 each contribute to the UDP-N-acetyl-alpha-D-glucosamine site.

The protein belongs to the EPSP synthase family. MurA subfamily.

The protein resides in the cytoplasm. The enzyme catalyses phosphoenolpyruvate + UDP-N-acetyl-alpha-D-glucosamine = UDP-N-acetyl-3-O-(1-carboxyvinyl)-alpha-D-glucosamine + phosphate. The protein operates within cell wall biogenesis; peptidoglycan biosynthesis. Its function is as follows. Cell wall formation. Adds enolpyruvyl to UDP-N-acetylglucosamine. In Wolbachia sp. subsp. Brugia malayi (strain TRS), this protein is UDP-N-acetylglucosamine 1-carboxyvinyltransferase.